Here is a 345-residue protein sequence, read N- to C-terminus: uncharacterized protein (345 aa).

Its subcellular location is the cell membrane. Its function is as follows. Involved in potassium and divalent cation transport. Enhances the transport activity of the cation/potassium transporter CzcD. This is an uncharacterized protein from Bacillus velezensis (strain DSM 23117 / BGSC 10A6 / LMG 26770 / FZB42) (Bacillus amyloliquefaciens subsp. plantarum).